Consider the following 49-residue polypeptide: uncharacterized protein (49 aa).

The protein belongs to the ELIP/psbS family.

It is found in the plastid. It localises to the cyanelle. In terms of biological role, possible role in chlorophyll and/or carotenoid binding. This is an uncharacterized protein from Cyanophora paradoxa.